Here is a 344-residue protein sequence, read N- to C-terminus: Outer membrane protein B (344 aa).

A signal peptide spans 1 to 30; that stretch reads MNSKMLKHLRLATLSFSMFFGIVSSPAVYA.

This sequence belongs to the chlamydial OMP family.

The protein localises to the cell outer membrane. The polypeptide is Outer membrane protein B (ompB) (Chlamydia pneumoniae (Chlamydophila pneumoniae)).